The following is a 705-amino-acid chain: Choline transporter-like protein 2 (705 aa).

Over 1–33 the chain is Cytoplasmic; the sequence is MGKDSQHYYGKHGTPQKYDPTFKGPIYNRGCTD. Position 14 is a phosphothreonine (threonine 14). The chain crosses the membrane as a helical span at residues 34 to 54; it reads IICCVLLFLAIVGYVAVGIIA. At 55-232 the chain is on the extracellular side; that stretch reads WTHGDPRKVI…QIFEDYTVSW (178 aa). 2 N-linked (GlcNAc...) asparagine glycosylation sites follow: asparagine 187 and asparagine 200. Residues 233-253 form a helical membrane-spanning segment; the sequence is YWIVIGLVIAMLLSLMFIVLL. Residues 254 to 256 lie on the Cytoplasmic side of the membrane; it reads RFL. The chain crosses the membrane as a helical span at residues 257-277; it reads AGVMVWVMIVMVILVLGYGIF. Residues 278 to 315 lie on the Extracellular side of the membrane; sequence HCYAEYSRLRGEAGSDVSLVDLGFQTDLRVYLHLRQTW. A helical membrane pass occupies residues 316–336; it reads MAFMIILSILEVVIILLLIFL. The Cytoplasmic segment spans residues 337-364; that stretch reads RKRILIAIALIKEASRAVGHVMCSMLYP. Residues 365–385 form a helical membrane-spanning segment; it reads LVTFFLLCLCIAYWASTSVFL. At 386–453 the chain is on the extracellular side; sequence STSNVAVYKI…LQIFNAFMFF (68 aa). The N-linked (GlcNAc...) asparagine glycan is linked to asparagine 416. A helical membrane pass occupies residues 454–476; sequence WLANFVLALGQVTLAGAFASYYW. Over 477–503 the chain is Cytoplasmic; the sequence is AMRKPDDMPAFPLFSAFGRALRYHTGS. A helical transmembrane segment spans residues 504–524; that stretch reads LAFGSLILAIVQIIRVMLEYL. Residues 525 to 562 lie on the Extracellular side of the membrane; sequence DQRLKAAQNKFAKFLMVCLKCCFWCLEKFIKFLNRNAY. Residues 563-583 traverse the membrane as a helical segment; it reads IMIAIYGTNFCTSARNAFFLL. Residues 584-598 are Cytoplasmic-facing; it reads MRNIIRVAVLDKVTD. Residues 599-619 traverse the membrane as a helical segment; sequence FLFLLGKLLIVGSVGILAFFF. Residues 620–637 are Extracellular-facing; it reads FTHRIRIVQDTAPPLNYY. Residues 638–658 traverse the membrane as a helical segment; the sequence is WVPILTVIIGSYLIAHGFFSV. Residues 659 to 705 lie on the Cytoplasmic side of the membrane; sequence YGMCVDTLFLCFLEDLERNDGSAERPYFMSSTLKKLLNKTNKKVAES.

Belongs to the CTL (choline transporter-like) family. In terms of assembly, interacts with COCH. Post-translationally, N-glycosylated.

It localises to the cell membrane. The protein localises to the mitochondrion outer membrane. It carries out the reaction choline(out) + n H(+)(in) = choline(in) + n H(+)(out). The catalysed reaction is ethanolamine(out) + n H(+)(in) = ethanolamine(in) + n H(+)(out). Its function is as follows. Exhibits choline transporter activity, as choline/H+ antiporter. Also acts as a low-affinity ethanolamine/H+ antiporter, regulating the supply of extracellular ethanolamine (Etn) for the CDP-Etn pathway, redistribute intracellular Etn and balance the CDP-Cho and CDP-Etn arms of the Kennedy pathway. This is Choline transporter-like protein 2 (Slc44a2) from Rattus norvegicus (Rat).